The sequence spans 653 residues: Chaperone protein HtpG (653 aa).

Positions 1-361 (MSETNQVQNH…SNDLPLNVSR (361 aa)) are a; substrate-binding. Positions 362–578 (EILQDNKVTQ…DDDMSSQMAK (217 aa)) are b. The interval 579 to 653 (LMASVGQEVP…LNKLMLSLTK (75 aa)) is c.

Belongs to the heat shock protein 90 family. Homodimer.

Its subcellular location is the cytoplasm. Functionally, molecular chaperone. Has ATPase activity. In Colwellia psychrerythraea (strain 34H / ATCC BAA-681) (Vibrio psychroerythus), this protein is Chaperone protein HtpG.